The sequence spans 252 residues: MRVLLSNDDGFHANGIKALKEIVIKSGIASEIWVVAPLNNCSGSGRSVGLNVKVQVSKVSDTEFIVDSTPSTSVFLALRKIMNYKPDLILSGINHGVNIGNDVWYSGTVAAAAEGAAINIPSIAISQEYDNKSGEINWVNPQRFLKQIIEMLMNVSFWNKSTVMNVNFPLMPAKGIKFTDQGKYVPCNEIEKNESSDDSNVSYTITRITPNKKNRAQCDGSIKAIDEGYITITPLKFDMTDFDVLTSLNSLK.

A divalent metal cation contacts are provided by Asp-8, Asp-9, Ser-42, and Asn-94.

This sequence belongs to the SurE nucleotidase family. A divalent metal cation serves as cofactor.

The protein localises to the cytoplasm. The enzyme catalyses a ribonucleoside 5'-phosphate + H2O = a ribonucleoside + phosphate. In terms of biological role, nucleotidase that shows phosphatase activity on nucleoside 5'-monophosphates. This is 5'-nucleotidase SurE from Ehrlichia ruminantium (strain Welgevonden).